Consider the following 130-residue polypeptide: S-adenosylmethionine decarboxylase proenzyme (130 aa).

The active-site Schiff-base intermediate with substrate; via pyruvic acid is the Ser66. Ser66 carries the post-translational modification Pyruvic acid (Ser); by autocatalysis. The Proton acceptor; for processing activity role is filled by His71. The active-site Proton donor; for catalytic activity is Cys86.

Belongs to the prokaryotic AdoMetDC family. Type 1 subfamily. Heterotetramer of two alpha and two beta chains arranged as a dimer of alpha/beta heterodimers. Requires pyruvate as cofactor. Post-translationally, is synthesized initially as an inactive proenzyme. Formation of the active enzyme involves a self-maturation process in which the active site pyruvoyl group is generated from an internal serine residue via an autocatalytic post-translational modification. Two non-identical subunits are generated from the proenzyme in this reaction, and the pyruvate is formed at the N-terminus of the alpha chain, which is derived from the carboxyl end of the proenzyme. The post-translation cleavage follows an unusual pathway, termed non-hydrolytic serinolysis, in which the side chain hydroxyl group of the serine supplies its oxygen atom to form the C-terminus of the beta chain, while the remainder of the serine residue undergoes an oxidative deamination to produce ammonia and the pyruvoyl group blocking the N-terminus of the alpha chain.

The catalysed reaction is S-adenosyl-L-methionine + H(+) = S-adenosyl 3-(methylsulfanyl)propylamine + CO2. It participates in amine and polyamine biosynthesis; S-adenosylmethioninamine biosynthesis; S-adenosylmethioninamine from S-adenosyl-L-methionine: step 1/1. Functionally, catalyzes the decarboxylation of S-adenosylmethionine to S-adenosylmethioninamine (dcAdoMet), the propylamine donor required for the synthesis of the polyamines spermine and spermidine from the diamine putrescine. The polypeptide is S-adenosylmethionine decarboxylase proenzyme (Bacillus cytotoxicus (strain DSM 22905 / CIP 110041 / 391-98 / NVH 391-98)).